A 952-amino-acid chain; its full sequence is UPF0182 protein SRU_2225 (952 aa).

7 helical membrane passes run 12 to 32, 52 to 72, 109 to 129, 168 to 188, 207 to 227, 247 to 267, and 277 to 297; these read ILLG…GLVV, AQVL…GGNF, LGYV…SGRW, AVVG…VIAG, LGAN…LDLY, VVIP…GLVG, and LLGI…VLAP. The interval 917-952 is disordered; the sequence is VPLPDTTGTVPPPTSSDTTGTMTAPTGDVSEVTGGS. Polar residues predominate over residues 931-940; that stretch reads SSDTTGTMTA.

It belongs to the UPF0182 family.

The protein resides in the cell membrane. This Salinibacter ruber (strain DSM 13855 / M31) protein is UPF0182 protein SRU_2225.